A 277-amino-acid polypeptide reads, in one-letter code: Pantothenate synthetase (277 aa).

26–33 (MGNLHEGH) is an ATP binding site. His33 functions as the Proton donor in the catalytic mechanism. Gln57 is a binding site for (R)-pantoate. Gln57 contacts beta-alanine. Position 144–147 (144–147 (GKKD)) interacts with ATP. Gln150 contacts (R)-pantoate. ATP contacts are provided by residues Val173 and 181-184 (LSSR).

Belongs to the pantothenate synthetase family. As to quaternary structure, homodimer.

It localises to the cytoplasm. The enzyme catalyses (R)-pantoate + beta-alanine + ATP = (R)-pantothenate + AMP + diphosphate + H(+). It participates in cofactor biosynthesis; (R)-pantothenate biosynthesis; (R)-pantothenate from (R)-pantoate and beta-alanine: step 1/1. In terms of biological role, catalyzes the condensation of pantoate with beta-alanine in an ATP-dependent reaction via a pantoyl-adenylate intermediate. In Paraburkholderia xenovorans (strain LB400), this protein is Pantothenate synthetase.